A 181-amino-acid chain; its full sequence is uncharacterized protein (181 aa).

Residues 133–153 form a helical membrane-spanning segment; it reads MCVCVHVCACVYVCMCVLVCM.

The protein localises to the membrane. This is an uncharacterized protein from Homo sapiens (Human).